The following is a 174-amino-acid chain: tRNA (cytidine(56)-2'-O)-methyltransferase (174 aa).

Residues L80, 105–109 (GAEKV), and 123–130 (ISNQPHSE) each bind S-adenosyl-L-methionine.

The protein belongs to the aTrm56 family. As to quaternary structure, homodimer.

The protein resides in the cytoplasm. The enzyme catalyses cytidine(56) in tRNA + S-adenosyl-L-methionine = 2'-O-methylcytidine(56) in tRNA + S-adenosyl-L-homocysteine + H(+). In terms of biological role, specifically catalyzes the AdoMet-dependent 2'-O-ribose methylation of cytidine at position 56 in tRNAs. In Metallosphaera sedula (strain ATCC 51363 / DSM 5348 / JCM 9185 / NBRC 15509 / TH2), this protein is tRNA (cytidine(56)-2'-O)-methyltransferase.